The following is a 366-amino-acid chain: Transcription factor IIIA (366 aa).

C2H2-type zinc fingers lie at residues 35-59, 65-89, 95-120, 127-151, 157-181, 184-210, 214-236, 243-268, and 274-298; these read YICSFADCGAAYNKNWKLQAHLCKH, FPCKEEGCEKGFTSLHHLTRHSLTH, FTCDSDGCDLRFTTKANMKKHFNRFH, YVCHFENCGKAFKKHNQLKVHQFSH, YECPHEGCDKRFSLPSRLKRHEKVH, YPCKKDDSCSFVGKTWTLYLKHVAECH, AVCDVCNRKFRHKDYLRDHQKTH, YLCPRDGCDRSYTTAFNLRSHIQSFH, and FVCEHAGCGKCFAMKKSLERHSVVH. Ser38 is subject to Phosphoserine; by CK2. Basic and acidic residues predominate over residues 299-310; sequence DPEKRKLKEKCP. The interval 299 to 366 is disordered; it reads DPEKRKLKEK…SLVLDKLTIQ (68 aa). Ser336 bears the Phosphoserine; by CK2; in vitro mark.

Post-translationally, the N-terminus is blocked. Synthesized in oocytes and, in much lower levels, in somatic cells.

It localises to the nucleus. Functionally, involved in ribosomal large subunit biogenesis. Acts both as a positive transcription factor for 5S RNA genes, and as a specific RNA binding protein that complexes with 5S RNA in oocytes to form the 7S ribonucleoprotein storage particle. May play an essential role in the developmental change in 5S RNA gene expression. Interacts with the internal control region (ICR) of approximately 50 bases within the 5S RNA genes, is required for correct transcription of these genes by RNA polymerase III. Also binds the transcribed 5S RNA's. This Xenopus laevis (African clawed frog) protein is Transcription factor IIIA (gtf3a).